We begin with the raw amino-acid sequence, 505 residues long: Deoxyguanosinetriphosphate triphosphohydrolase (505 aa).

Residues 66 to 273 (RLTHSMEVQQ…MEAADDISYC (208 aa)) form the HD domain.

It belongs to the dGTPase family. Type 1 subfamily. As to quaternary structure, homotetramer. Mg(2+) serves as cofactor.

It carries out the reaction dGTP + H2O = 2'-deoxyguanosine + triphosphate + H(+). In terms of biological role, dGTPase preferentially hydrolyzes dGTP over the other canonical NTPs. The sequence is that of Deoxyguanosinetriphosphate triphosphohydrolase from Salmonella paratyphi A (strain AKU_12601).